Here is a 41-residue protein sequence, read N- to C-terminus: MTRNVVRQEFEAPGKPQDSSQQDACLILVKGNWTTNEMEVK.

The span at 1–12 (MTRNVVRQEFEA) shows a compositional bias: basic and acidic residues. Positions 1–23 (MTRNVVRQEFEAPGKPQDSSQQD) are disordered.

This is an uncharacterized protein from Homo sapiens (Human).